The chain runs to 105 residues: Putative thioredoxin-5 (105 aa).

One can recognise a Thioredoxin domain in the interval 1-104 (MYKEPKNESE…VALENMVKKL (104 aa)). Residues cysteine 30 and cysteine 33 each act as nucleophile in the active site. Cysteine 30 and cysteine 33 form a disulfide bridge.

It belongs to the thioredoxin family.

In terms of biological role, participates in various redox reactions through the reversible oxidation of its active center dithiol to a disulfide and catalyzes dithiol-disulfide exchange reactions. The protein is Putative thioredoxin-5 (trxE) of Dictyostelium discoideum (Social amoeba).